A 385-amino-acid polypeptide reads, in one-letter code: DNA replication and repair protein RecF (385 aa).

30-37 (GRNGQGKT) contributes to the ATP binding site.

Belongs to the RecF family.

The protein localises to the cytoplasm. In terms of biological role, the RecF protein is involved in DNA metabolism; it is required for DNA replication and normal SOS inducibility. RecF binds preferentially to single-stranded, linear DNA. It also seems to bind ATP. The polypeptide is DNA replication and repair protein RecF (Leifsonia xyli subsp. xyli (strain CTCB07)).